A 570-amino-acid polypeptide reads, in one-letter code: Periplasmic trehalase (570 aa).

Residues 1 to 34 (MIPPEIRRSVLLQKAIKLALAGTLLTFASFSATA) form the signal peptide. Substrate contacts are provided by residues Arg159, 166-167 (WD), Asn203, 212-214 (RSQ), 284-286 (RPE), and Gly317. Catalysis depends on proton donor/acceptor residues Asp319 and Glu503. Glu518 contacts substrate. Residues 545 to 570 (PCDSVPSTRPASLSATPTKTPSAATQ) are disordered. A compositionally biased stretch (low complexity) spans 554-570 (PASLSATPTKTPSAATQ).

The protein belongs to the glycosyl hydrolase 37 family. Monomer.

Its subcellular location is the periplasm. The catalysed reaction is alpha,alpha-trehalose + H2O = alpha-D-glucose + beta-D-glucose. Provides the cells with the ability to utilize trehalose at high osmolarity by splitting it into glucose molecules that can subsequently be taken up by the phosphotransferase-mediated uptake system. The chain is Periplasmic trehalase from Salmonella agona (strain SL483).